A 676-amino-acid chain; its full sequence is GRB2-associated-binding protein 2 (676 aa).

Serine 2 is modified (phosphoserine). In terms of domain architecture, PH spans aspartate 6–glycine 117. Residues serine 127–asparagine 178 are disordered. A phosphoserine mark is found at serine 133, serine 140, serine 141, serine 148, serine 149, serine 159, serine 164, serine 210, serine 218, serine 223, and serine 264. Over residues serine 140 to serine 149 the composition is skewed to low complexity. Polar residues predominate over residues serine 159–leucine 169. A Phosphothreonine modification is found at threonine 265. Tyrosine 266 is modified (phosphotyrosine). Threonine 278 bears the Phosphothreonine mark. Phosphoserine occurs at positions 281 and 285. At threonine 287 the chain carries Phosphothreonine. At tyrosine 293 the chain carries Phosphotyrosine. Phosphothreonine is present on threonine 331. Residues valine 341–valine 430 form a disordered region. Positions proline 351 to proline 358 match the SH3-binding motif. Phosphoserine is present on serine 368. A phosphothreonine mark is found at threonine 385 and threonine 391. Position 405 is a phosphoserine (serine 405). Position 408 is a phosphothreonine (threonine 408). 2 positions are modified to phosphoserine: serine 422 and serine 425. Residue tyrosine 452 is modified to Phosphotyrosine. Position 480 is a phosphoserine (serine 480). A disordered region spans residues proline 492–arginine 531. The short motif at proline 510 to proline 519 is the SH3-binding element. Residue serine 543 is modified to Phosphoserine. Polar residues-rich tracts occupy residues phenylalanine 556–serine 577 and asparagine 589–serine 611. 2 disordered regions span residues phenylalanine 556–tyrosine 643 and asparagine 656–leucine 676. 2 positions are modified to phosphoserine: serine 622 and serine 623. At tyrosine 643 the chain carries Phosphotyrosine. Over residues asparagine 656–proline 670 the composition is skewed to polar residues.

The protein belongs to the GAB family. Part of a complex composed of EEIG1, TNFRSF11A/RANK, PLCG2, GAB2, TEC and BTK; complex formation increases in the presence of TNFSF11/RANKL. Interacts with SHC1; may mediate interaction with receptors. Interacts with SYK. Interacts with PI-3 kinase. Interacts with GRB2 (via SH3 2 domain). Interacts (phosphorylated) with PTPN11. Interacts with TNFRSF11A (via cytoplasmic domain). Interacts (phosphorylated) with 14-3-3 family proteins SFN, YWHAB, YWHAE, YWHAG, YWHAH, YWHAQ and YWHAZ; prevents interaction with GRB2 and attenuates GAB2 signaling. Interacts with HCK. Phosphorylated on tyrosine residue(s) by the thrombopoietin receptor (TPOR), stem cell factor receptor (SCFR), and T-cell and B-cell antigen receptors, gp130, IL-2R and IL-3R. Phosphorylated upon stimulation of TNFRSF11A/RANK by TNFSF11/RANKL. Phosphorylated upon EGF stimulation. Phosphorylated on tyrosine residues by HCK upon IL6 signaling. In terms of processing, dephosphorylated by PTPN11.

It is found in the cytoplasm. The protein resides in the cell membrane. Its subcellular location is the membrane raft. Its function is as follows. Adapter protein which acts downstream of several membrane receptors including cytokine, antigen, hormone, cell matrix and growth factor receptors to regulate multiple signaling pathways. Regulates osteoclast differentiation mediating the TNFRSF11A/RANK signaling. In allergic response, it plays a role in mast cells activation and degranulation through PI-3-kinase regulation. Also involved in the regulation of cell proliferation and hematopoiesis. The polypeptide is GRB2-associated-binding protein 2 (GAB2) (Homo sapiens (Human)).